The following is a 123-amino-acid chain: Large ribosomal subunit protein eL8 (123 aa).

Belongs to the eukaryotic ribosomal protein eL8 family. As to quaternary structure, part of the 50S ribosomal subunit. Probably part of the RNase P complex.

Its subcellular location is the cytoplasm. Its function is as follows. Multifunctional RNA-binding protein that recognizes the K-turn motif in ribosomal RNA, the RNA component of RNase P, box H/ACA, box C/D and box C'/D' sRNAs. This is Large ribosomal subunit protein eL8 from Thermococcus kodakarensis (strain ATCC BAA-918 / JCM 12380 / KOD1) (Pyrococcus kodakaraensis (strain KOD1)).